The sequence spans 139 residues: GSK3-beta interaction protein (139 aa).

The tract at residues 1 to 22 is disordered; it reads METDCNPMELSSMSGFEEGSEL. Positions 41-45 are required for PRKAR2A interaction; contributes to a protective effect against H(2)O(2)-induced apoptosis; sequence VNDVL. The interval 115-139 is interaction with GSK3B and acts as a GSK3B inhibitor; sequence SPAYREAFGNALLQRLEALKRDGQS.

Belongs to the GSKIP family. As to quaternary structure, forms a complex composed of PRKAR2A or PRKAR2B, GSK3B and GSKIP through GSKIP interaction; facilitates PKA-induced phosphorylation of GSK3B leading to GSK3B inactivation; recruits DNM1L through GSK3B for PKA-mediated phosphorylation of DNM1L; promotes beta-catenin degradation through GSK3B-induced phosphorylation of beta-catenin; stabilizes beta-catenin and enhances Wnt-induced signaling through PKA-induced phosphorylation of beta-catenin. Interacts with GSK3B; induces GSK3B-mediated phosphorylation of GSKIP and inhibits GSK3B kinase activity. Post-translationally, phosphorylated by GSK3B.

It is found in the cytoplasm. It localises to the nucleus. In terms of biological role, A-kinase anchoring protein for GSK3B and PKA that regulates or facilitates their kinase activity towards their targets. The ternary complex enhances Wnt-induced signaling by facilitating the GSK3B- and PKA-induced phosphorylation of beta-catenin leading to beta-catenin degradation and stabilization respectively. Upon cAMP activation, the ternary complex contributes to neuroprotection against oxidative stress-induced apoptosis by facilitating the PKA-induced phosphorylation of DML1 and PKA-induced inactivation of GSK3B. During neurite outgrowth promotes neuron proliferation; while increases beta-catenin-induced transcriptional activity through GSK3B kinase activity inhibition, reduces N-cadherin level to promote cell cycle progression. May play a role in cleft palate formation and is required for postnatal life through modulation of the activity of GSK3B during development. In Macaca fascicularis (Crab-eating macaque), this protein is GSK3-beta interaction protein.